We begin with the raw amino-acid sequence, 179 residues long: MAQAEGTPDVPSMGRRQFMNLLTFGTVTGVALGALYPVVNYFIPPSSGGSGGGVTAKDALGNDIIVSEFLANHNSGERTLAQGLKGDPTYVVIEGEQTLAEYGLNAVCTHLGCVVPWNGSENKFICPCHGSQYDNTGKVVRGPAPLSLALVHANVSDDKLVFTQWEETDFRTGEKPWWV.

The helical transmembrane segment at 21 to 43 (LLTFGTVTGVALGALYPVVNYFI) threads the bilayer. Residues 61–162 (GNDIIVSEFL…ANVSDDKLVF (102 aa)) enclose the Rieske domain. Residues Cys108, His110, Cys126, and His129 each contribute to the [2Fe-2S] cluster site. Cys113 and Cys128 are joined by a disulfide.

Belongs to the Rieske iron-sulfur protein family. As to quaternary structure, the 4 large subunits of the cytochrome b6-f complex are cytochrome b6, subunit IV (17 kDa polypeptide, PetD), cytochrome f and the Rieske protein, while the 4 small subunits are PetG, PetL, PetM and PetN. The complex functions as a dimer. The cofactor is [2Fe-2S] cluster.

The protein resides in the cellular thylakoid membrane. The catalysed reaction is 2 oxidized [plastocyanin] + a plastoquinol + 2 H(+)(in) = 2 reduced [plastocyanin] + a plastoquinone + 4 H(+)(out). In terms of biological role, component of the cytochrome b6-f complex, which mediates electron transfer between photosystem II (PSII) and photosystem I (PSI), cyclic electron flow around PSI, and state transitions. This Trichodesmium erythraeum (strain IMS101) protein is Cytochrome b6-f complex iron-sulfur subunit.